The primary structure comprises 971 residues: Reversion-inducing cysteine-rich protein with Kazal motifs (971 aa).

Residues 1-22 (MASVRASPRSALLLLLAAAGVA) form the signal peptide. The stretch at 37–84 (CCNHSKDNQMCRDVCEQIFSSKSESRLKHLLQRAPDYCPETMVEIWSC) is one Knot 1 repeat. The segment at 37-338 (CCNHSKDNQM…NPVEVSMLTC (302 aa)) is 5 X Knot repeats. Residues Asn39 and Asn86 are each glycosylated (N-linked (GlcNAc...) asparagine). Knot repeat units follow at residues 104 to 141 (CCEL…LFSC) and 151 to 197 (CCSY…LIHC). A glycan (N-linked (GlcNAc...) asparagine) is linked at Asn200. Knot repeat units follow at residues 216–263 (CCDR…LWQC) and 292–338 (CCSK…MLTC). Asn297 and Asn352 each carry an N-linked (GlcNAc...) asparagine glycan. 3 consecutive Kazal-like domains span residues 627–673 (TFTG…PCIS), 698–752 (TFDK…PCQP), and 753–789 (FCRA…PCQA). 6 disulfide bridges follow: Cys633–Cys658, Cys635–Cys654, Cys643–Cys671, Cys716–Cys735, Cys724–Cys750, and Cys761–Cys787. The 47-residue stretch at 704 to 750 (CSQYECVPRQLTCDQARDPVCDTDHMEHSNLCTLYQRGKSLSYRGPC) folds into the Kazal-like 2; degenerate domain. Residue Ser942 is the site of GPI-anchor amidated serine attachment. Positions 943-971 (SAVVGRPLFHSLLLLLSLGLTVHLLWTRP) are cleaved as a propeptide — removed in mature form.

This sequence belongs to the RECK family. Interacts (via knot repeats) with WNT7A (via disordered linker region); the interaction is direct. Interacts (via knot repeats) with WNT7B (via disordered linker region); the interaction is direct. Interacts with ADGRA2; the interaction is direct. Interacts with MMP9.

Its subcellular location is the cell membrane. Functions together with ADGRA2 to enable brain endothelial cells to selectively respond to Wnt7 signals (WNT7A or WNT7B). Plays a key role in Wnt7-specific responses: required for central nervous system (CNS) angiogenesis and blood-brain barrier regulation. Acts as a Wnt7-specific coactivator of canonical Wnt signaling by decoding Wnt ligands: acts by interacting specifically with the disordered linker region of Wnt7, thereby conferring ligand selectivity for Wnt7. ADGRA2 is then required to deliver RECK-bound Wnt7 to frizzled by assembling a higher-order RECK-ADGRA2-Fzd-LRP5-LRP6 complex. Also acts as a serine protease inhibitor: negatively regulates matrix metalloproteinase-9 (MMP9) by suppressing MMP9 secretion and by direct inhibition of its enzymatic activity. Also inhibits metalloproteinase activity of MMP2 and MMP14 (MT1-MMP). In Mus musculus (Mouse), this protein is Reversion-inducing cysteine-rich protein with Kazal motifs.